The sequence spans 427 residues: Inward rectifier potassium channel 2 (427 aa).

The Cytoplasmic segment spans residues 1 to 81 (MGSVRTNRYS…IFTTCVDIRW (81 aa)). At Cys-76 the chain carries S-nitrosocysteine. Residues 82–106 (RWMLVIFCLAFVLSWLFFGCVFWLI) form a helical membrane-spanning segment. At 107 to 128 (ALLHGDLDASKESKACVSEVNS) the chain is on the extracellular side. Positions 129–140 (FTAAFLFSIETQ) form an intramembrane region, helical; Pore-forming. The pore-forming intramembrane region spans 141 to 147 (TTIGYGF). Positions 142–147 (TIGYGF) match the Selectivity filter motif. Residues 148–156 (RCVTDECPV) lie on the Extracellular side of the membrane. Residues 157–178 (AVFMVVFQSIVGCIIDAFIIGA) form a helical membrane-spanning segment. Residues 179–427 (VMAKMAKPKK…PRPLRRESEI (249 aa)) lie on the Cytoplasmic side of the membrane. Positions 181–208 (AKMAKPKKRNETLVFSHNAVIAMRDGKL) are polyphosphoinositide (PIP2)-binding. Positions 384–427 (SKEEDDSENGVPESTSTDTPPDIDLHNQASVPLEPRPLRRESEI) are disordered. Residues 425–427 (SEI) carry the PDZ-binding motif.

Belongs to the inward rectifier-type potassium channel (TC 1.A.2.1) family. KCNJ2 subfamily. As to quaternary structure, homotetramer. Homomultimeric and heteromultimeric association with KCNJ4/Kir2.3. Can form heteromeric channels with Kir2.6/KCNJ18. Associates, via its PDZ-recognition domain, with a complex containing LIN7A, LIN7B, LIN7C, DLG1, CASK and APBA1. Post-translationally, S-nitrosylation increases the open probability and inward rectifying currents.

The protein resides in the cell membrane. Its subcellular location is the sarcolemma. It is found in the T-tubule. The enzyme catalyses K(+)(in) = K(+)(out). Its activity is regulated as follows. Activated by phosphatidylinositol 4,5 biphosphate (PtdIns(4,5)P2). Functionally, inward rectifier potassium channels are characterized by a greater tendency to allow potassium to flow into the cell rather than out of it. Their voltage dependence is regulated by the concentration of extracellular potassium; as external potassium is raised, the voltage range of the channel opening shifts to more positive voltages. The inward rectification is mainly due to the blockage of outward current by internal magnesium. Can be blocked by extracellular barium and cesium. Probably participates in establishing action potential waveform and excitability of neuronal and muscle tissues. The protein is Inward rectifier potassium channel 2 (KCNJ2) of Bos taurus (Bovine).